The primary structure comprises 272 residues: S-adenosylmethionine decarboxylase proenzyme (272 aa).

The active-site Schiff-base intermediate with substrate; via pyruvic acid is the serine 122. Pyruvic acid (Ser); by autocatalysis is present on serine 122. Catalysis depends on histidine 127, which acts as the Proton acceptor; for processing activity. Cysteine 150 serves as the catalytic Proton donor; for catalytic activity.

It belongs to the prokaryotic AdoMetDC family. Type 2 subfamily. In terms of assembly, heterooctamer of four alpha and four beta chains arranged as a tetramer of alpha/beta heterodimers. Pyruvate is required as a cofactor. Post-translationally, is synthesized initially as an inactive proenzyme. Formation of the active enzyme involves a self-maturation process in which the active site pyruvoyl group is generated from an internal serine residue via an autocatalytic post-translational modification. Two non-identical subunits are generated from the proenzyme in this reaction, and the pyruvate is formed at the N-terminus of the alpha chain, which is derived from the carboxyl end of the proenzyme. The post-translation cleavage follows an unusual pathway, termed non-hydrolytic serinolysis, in which the side chain hydroxyl group of the serine supplies its oxygen atom to form the C-terminus of the beta chain, while the remainder of the serine residue undergoes an oxidative deamination to produce ammonia and the pyruvoyl group blocking the N-terminus of the alpha chain.

The catalysed reaction is S-adenosyl-L-methionine + H(+) = S-adenosyl 3-(methylsulfanyl)propylamine + CO2. It participates in amine and polyamine biosynthesis; S-adenosylmethioninamine biosynthesis; S-adenosylmethioninamine from S-adenosyl-L-methionine: step 1/1. Catalyzes the decarboxylation of S-adenosylmethionine to S-adenosylmethioninamine (dcAdoMet), the propylamine donor required for the synthesis of the polyamines spermine and spermidine from the diamine putrescine. The protein is S-adenosylmethionine decarboxylase proenzyme of Clostridium botulinum (strain Alaska E43 / Type E3).